Reading from the N-terminus, the 117-residue chain is Protein Aeq5-like2 (117 aa).

At 1 to 36 (MLVNARAIRQSIGIVVAQCRRDLESNRTLDYRTRMR) the chain is on the cytoplasmic side. The helical transmembrane segment at 37 to 56 (TSLILVAMVMVSVLLPYTYG) threads the bilayer. At 57–117 (SSCDSFCTEQ…RFTKEPTEES (61 aa)) the chain is on the extracellular side. 4 disulfide bridges follow: Cys59/Cys94, Cys63/Cys90, Cys70/Cys83, and Cys74/Cys80.

In terms of processing, the mature peptide may be cleaved at a dibasic residue site and be shorter than the sequence shown (possibly residues 1-94). In terms of tissue distribution, expressed in endodermal ganglion neurons, apparently bipolar and following mesentery folds (observed in both planulae and primary polyps). It not expressed in nematocytes.

The protein localises to the membrane. The chain is Protein Aeq5-like2 from Nematostella vectensis (Starlet sea anemone).